Consider the following 211-residue polypeptide: MTSPSDFPTPPVPGRLLDVEDVTVFRGDRLVLDGVSLTLDAGDAMILTGPNGAGKSTLLRTISGLRRPDSGEVIRYGDLAWLGHQDALKPGLTLAQNLALAEKLGTNSLSDALEALDLTHLTDLPARLLSSGQKRRAAFARVMLSGALLWLLDEPTVGLDVASIERLGAVMAAHRAKGGAMIVTTHVPLPLDNTRSHELPSLAHVESFWLS.

An ABC transporter domain is found at 17 to 209; it reads LDVEDVTVFR…PSLAHVESFW (193 aa). Position 49 to 56 (49 to 56) interacts with ATP; sequence GPNGAGKS.

It belongs to the ABC transporter superfamily. CcmA exporter (TC 3.A.1.107) family. As to quaternary structure, the complex is composed of two ATP-binding proteins (CcmA) and two transmembrane proteins (CcmB).

It is found in the cell inner membrane. It carries out the reaction heme b(in) + ATP + H2O = heme b(out) + ADP + phosphate + H(+). Functionally, part of the ABC transporter complex CcmAB involved in the biogenesis of c-type cytochromes; once thought to export heme, this seems not to be the case, but its exact role is uncertain. Responsible for energy coupling to the transport system. This is Cytochrome c biogenesis ATP-binding export protein CcmA from Gluconobacter oxydans (strain 621H) (Gluconobacter suboxydans).